Here is a 501-residue protein sequence, read N- to C-terminus: Cilia- and flagella-associated protein 45 (501 aa).

The stretch at 75-114 forms a coiled coil; that stretch reads MTAEDVAAAKREAEAKREQLQAVSKARKEKMLKLEEEAKK.

It belongs to the CFAP45 family.

The protein resides in the cell projection. It localises to the cilium. The protein localises to the flagellum. The sequence is that of Cilia- and flagella-associated protein 45 from Chlamydomonas reinhardtii (Chlamydomonas smithii).